The following is a 225-amino-acid chain: MIVYSFPTLYEEIVKARINRFTVVTESEKICHLHDPGRLKELIYPGNKILIRNVNGKRKTNCQVTAAWSGKEWVVTDSSIHNEIARRFLPSDAKSEVTVGKSRIDFAFDNTYVEVKGCTLARDGIALFPDAPTKRGKRHLDELIELRRNGYSVLLMILVFRTDVVCFSPNFDTDRDFSNTFIKALKEGVNVEVKVFQLDKENIVYKGEIPVCHQILEKSTNFSLP.

This sequence belongs to the SfsA family.

The chain is Sugar fermentation stimulation protein homolog from Sulfurisphaera tokodaii (strain DSM 16993 / JCM 10545 / NBRC 100140 / 7) (Sulfolobus tokodaii).